Here is a 153-residue protein sequence, read N- to C-terminus: Aspartate carbamoyltransferase regulatory chain (153 aa).

The Zn(2+) site is built by Cys109, Cys114, Cys135, and Cys138.

It belongs to the PyrI family. In terms of assembly, contains catalytic and regulatory chains. Zn(2+) serves as cofactor.

Involved in allosteric regulation of aspartate carbamoyltransferase. The sequence is that of Aspartate carbamoyltransferase regulatory chain from Natronomonas pharaonis (strain ATCC 35678 / DSM 2160 / CIP 103997 / JCM 8858 / NBRC 14720 / NCIMB 2260 / Gabara) (Halobacterium pharaonis).